A 340-amino-acid polypeptide reads, in one-letter code: Guanine nucleotide-binding protein G(I)/G(S)/G(T) subunit beta-2 (340 aa).

Residue Ser2 is modified to N-acetylserine. WD repeat units follow at residues Gly53–Asp83, Leu95–Ser125, Gly141–Asp170, Gly182–Asp212, Gly224–Asp254, Asn268–Asp298, and Gly310–Asn340. Tyr239 carries the phosphotyrosine modification.

This sequence belongs to the WD repeat G protein beta family. In terms of assembly, g proteins are composed of 3 units, alpha, beta and gamma. In this context, interacts with GNAI2 and GNG2. Interacts with ARHGEF18 and RASD2. Interacts with ATXN10. Interacts with SCN8A. As to expression, expressed in all cardiac subcompartments and in the brain, with highest levels in the atrioventricular node and brain.

It localises to the cytoplasm. Its subcellular location is the perinuclear region. The protein resides in the cell membrane. Its function is as follows. Guanine nucleotide-binding proteins (G proteins) are involved as a modulator or transducer in various transmembrane signaling systems. The beta and gamma chains are required for the GTPase activity, for replacement of GDP by GTP, and for G protein-effector interaction. The chain is Guanine nucleotide-binding protein G(I)/G(S)/G(T) subunit beta-2 (GNB2) from Homo sapiens (Human).